The primary structure comprises 200 residues: Holliday junction branch migration complex subunit RuvA (200 aa).

The domain I stretch occupies residues 1-63 (MIGKLSGKID…EEHIHLYGFL (63 aa)). Positions 64-142 (TLEEKNFFNL…KIFSSSAIIK (79 aa)) are domain II. Positions 142-146 (KDSSN) are flexible linker. The domain III stretch occupies residues 147–200 (ISSVEINEVIKALVNLGFTRFEAQNTVQGIITQNTKISIDELIKTALKNRNSSF).

It belongs to the RuvA family. In terms of assembly, homotetramer. Forms an RuvA(8)-RuvB(12)-Holliday junction (HJ) complex. HJ DNA is sandwiched between 2 RuvA tetramers; dsDNA enters through RuvA and exits via RuvB. An RuvB hexamer assembles on each DNA strand where it exits the tetramer. Each RuvB hexamer is contacted by two RuvA subunits (via domain III) on 2 adjacent RuvB subunits; this complex drives branch migration. In the full resolvosome a probable DNA-RuvA(4)-RuvB(12)-RuvC(2) complex forms which resolves the HJ.

Its subcellular location is the cytoplasm. The RuvA-RuvB-RuvC complex processes Holliday junction (HJ) DNA during genetic recombination and DNA repair, while the RuvA-RuvB complex plays an important role in the rescue of blocked DNA replication forks via replication fork reversal (RFR). RuvA specifically binds to HJ cruciform DNA, conferring on it an open structure. The RuvB hexamer acts as an ATP-dependent pump, pulling dsDNA into and through the RuvAB complex. HJ branch migration allows RuvC to scan DNA until it finds its consensus sequence, where it cleaves and resolves the cruciform DNA. This chain is Holliday junction branch migration complex subunit RuvA, found in Rickettsia typhi (strain ATCC VR-144 / Wilmington).